The sequence spans 398 residues: Acetate kinase (398 aa).

Residue asparagine 9 participates in Mg(2+) binding. Residue lysine 16 participates in ATP binding. Residue arginine 93 participates in substrate binding. Catalysis depends on aspartate 150, which acts as the Proton donor/acceptor. Residues 209–213 (HLGAG), 284–286 (DMR), and 329–333 (GIGEH) each bind ATP. Glutamate 382 provides a ligand contact to Mg(2+).

It belongs to the acetokinase family. As to quaternary structure, homodimer. Requires Mg(2+) as cofactor. Mn(2+) serves as cofactor.

The protein resides in the cytoplasm. The enzyme catalyses acetate + ATP = acetyl phosphate + ADP. Its pathway is metabolic intermediate biosynthesis; acetyl-CoA biosynthesis; acetyl-CoA from acetate: step 1/2. Catalyzes the formation of acetyl phosphate from acetate and ATP. Can also catalyze the reverse reaction. This is Acetate kinase from Rhodopseudomonas palustris (strain ATCC BAA-98 / CGA009).